The primary structure comprises 145 residues: Transcriptional regulator SlyA (145 aa).

The HTH marR-type domain maps to 2–135 (ELPLGSDLAR…LALLVARLEK (134 aa)). Residues 49 to 72 (QIQLAKAIGIEQPSLVRTLDQLEE) constitute a DNA-binding region (H-T-H motif).

It belongs to the SlyA family. In terms of assembly, homodimer.

In terms of biological role, transcription regulator that can specifically activate or repress expression of target genes. In Pectobacterium atrosepticum (strain SCRI 1043 / ATCC BAA-672) (Erwinia carotovora subsp. atroseptica), this protein is Transcriptional regulator SlyA.